Consider the following 482-residue polypeptide: tRNA sulfurtransferase (482 aa).

The THUMP domain occupies 61–165 (LAIRDALTRI…DDRLLLIKGR (105 aa)). ATP is bound by residues 183–184 (LI), K265, G287, and Q296. The cysteines at positions 344 and 456 are disulfide-linked. A Rhodanese domain is found at 404 to 482 (FGPNDVILDI…GFNNVKVYRP (79 aa)). C456 functions as the Cysteine persulfide intermediate in the catalytic mechanism.

It belongs to the ThiI family.

It localises to the cytoplasm. It catalyses the reaction [ThiI sulfur-carrier protein]-S-sulfanyl-L-cysteine + a uridine in tRNA + 2 reduced [2Fe-2S]-[ferredoxin] + ATP + H(+) = [ThiI sulfur-carrier protein]-L-cysteine + a 4-thiouridine in tRNA + 2 oxidized [2Fe-2S]-[ferredoxin] + AMP + diphosphate. The enzyme catalyses [ThiS sulfur-carrier protein]-C-terminal Gly-Gly-AMP + S-sulfanyl-L-cysteinyl-[cysteine desulfurase] + AH2 = [ThiS sulfur-carrier protein]-C-terminal-Gly-aminoethanethioate + L-cysteinyl-[cysteine desulfurase] + A + AMP + 2 H(+). It participates in cofactor biosynthesis; thiamine diphosphate biosynthesis. Functionally, catalyzes the ATP-dependent transfer of a sulfur to tRNA to produce 4-thiouridine in position 8 of tRNAs, which functions as a near-UV photosensor. Also catalyzes the transfer of sulfur to the sulfur carrier protein ThiS, forming ThiS-thiocarboxylate. This is a step in the synthesis of thiazole, in the thiamine biosynthesis pathway. The sulfur is donated as persulfide by IscS. This Escherichia coli O8 (strain IAI1) protein is tRNA sulfurtransferase.